We begin with the raw amino-acid sequence, 86 residues long: MSKGHSLQDPYLNTLRKEKVGVSIYLVNGIKLQGTIESFDQFVILLKNTVSQMVYKHAISTVVPVRPIRLPSATDADGADAEPGNA.

In terms of domain architecture, Sm spans 9 to 68 (DPYLNTLRKEKVGVSIYLVNGIKLQGTIESFDQFVILLKNTVSQMVYKHAISTVVPVRPI).

It belongs to the Hfq family. As to quaternary structure, homohexamer.

Its function is as follows. RNA chaperone that binds small regulatory RNA (sRNAs) and mRNAs to facilitate mRNA translational regulation in response to envelope stress, environmental stress and changes in metabolite concentrations. Also binds with high specificity to tRNAs. This is RNA-binding protein Hfq from Pseudomonas savastanoi pv. phaseolicola (strain 1448A / Race 6) (Pseudomonas syringae pv. phaseolicola (strain 1448A / Race 6)).